The chain runs to 432 residues: Endosome-associated-trafficking regulator 1 (432 aa).

A Phosphoserine modification is found at Ser18. Over residues 126–143 (DTTTSRIYPKEASRHPLG) the composition is skewed to basic and acidic residues. Residues 126-145 (DTTTSRIYPKEASRHPLGLE) are disordered. Ser148 bears the Phosphoserine mark. The tract at residues 174-196 (LEEDEDDGWNITYLPSAVDQTHS) is required for interaction with PTPN13. The interval 226 to 250 (PPWTLSDTDSRISPASPAGSPNADF) is disordered. 2 positions are modified to phosphoserine: Ser241 and Ser245. Coiled-coil stretches lie at residues 262 to 289 (LRTLQISYEALKDENSKLRRKLNEVQSF) and 315 to 370 (FHDL…LRSG).

The protein belongs to the ENTR1 family. Found in a complex with ENTR1, PTPN13 and GIT1. Interacts with PTPN13 (via the FERM domain). Interacts (via N-terminus) with GIT1 (via N- and C-terminus); this interaction is direct. Interacts with NOD2. Interacts (via N-terminus) with IFT88. Interacts with VPS35. Post-translationally, phosphorylated.

The protein localises to the cytoplasm. It localises to the early endosome. Its subcellular location is the endosome. The protein resides in the recycling endosome. It is found in the midbody. The protein localises to the cytoskeleton. It localises to the microtubule organizing center. Its subcellular location is the centrosome. The protein resides in the cilium basal body. Functionally, may be involved in modulation of TNF response. May be involved in presentation of TNFRSF1A on the cell surface. Involved in the endosome-to-plasma membrane trafficking and recycling of SNX27-retromer-dependent cargo proteins, such as GLUT1. Involved in the regulation of cytokinesis; the function may involve PTPN13 and GIT1. In terms of biological role, endosome-associated protein that plays a role in membrane receptor sorting, cytokinesis and ciliogenesis. Involved in the endosome-to-plasma membrane trafficking and recycling of SNX27-retromer-dependent cargo proteins, such as GLUT1. Involved in the regulation of cytokinesis; the function may involve PTPN13 and GIT1. Plays a role in the formation of cilia. Involved in cargo protein localization, such as PKD2, at primary cilia. Involved in the presentation of the tumor necrosis factor (TNF) receptor TNFRSF1A on the cell surface, and hence in the modulation of the TNF-induced apoptosis. The sequence is that of Endosome-associated-trafficking regulator 1 from Mus musculus (Mouse).